Consider the following 359-residue polypeptide: Phosphate acyltransferase (359 aa).

Positions 337 to 359 (AAGAAQPAPETEVPGAHPSPHVA) are disordered.

It belongs to the PlsX family. As to quaternary structure, homodimer. Probably interacts with PlsY.

The protein localises to the cytoplasm. It carries out the reaction a fatty acyl-[ACP] + phosphate = an acyl phosphate + holo-[ACP]. The protein operates within lipid metabolism; phospholipid metabolism. Functionally, catalyzes the reversible formation of acyl-phosphate (acyl-PO(4)) from acyl-[acyl-carrier-protein] (acyl-ACP). This enzyme utilizes acyl-ACP as fatty acyl donor, but not acyl-CoA. This Cupriavidus necator (strain ATCC 17699 / DSM 428 / KCTC 22496 / NCIMB 10442 / H16 / Stanier 337) (Ralstonia eutropha) protein is Phosphate acyltransferase.